A 411-amino-acid polypeptide reads, in one-letter code: MDIFKHHESQVQSYANHFPVLFGTAKGSWLYSQQGDAYLDFLSGAGALNYGHNNAVLKQALLEYIERDGLTHGLDMHSEAKAHFIQALQTHILEPRGLNYKLQFTGPTGTNAVEAALKLARKVTGRHNVVTFTNGFHGCSLGALAATGNQHHRQGAGLALSGVYRVPYDGYAGVDGLTLFETMLQDNSSGLDKPAAVLLETVQGEGGLNVASDAWLQRVQAICRAQQILLIVDDIQAGCGRTGTFFSFEPSGIEPDMVTLSKSLSGYGLPMALVLFKPEWDQWKPGEHNGTFRGNNHAFVTATRALEAYWANQDFQTHIAARSEQVTQALLQCLSRYPTLFSGLKGRGLMQGLACHNGDIARDIAALCFQKGLIIETAGAEDEVLKVFCPLTITEADLAHGLTIIERVLLE.

Lys-262 bears the N6-(pyridoxal phosphate)lysine mark.

This sequence belongs to the class-III pyridoxal-phosphate-dependent aminotransferase family. Pyridoxal 5'-phosphate is required as a cofactor.

It catalyses the reaction L-2,4-diaminobutanoate + 2-oxoglutarate = L-aspartate 4-semialdehyde + L-glutamate. Its pathway is amine and polyamine biosynthesis; ectoine biosynthesis; L-ectoine from L-aspartate 4-semialdehyde: step 1/3. Its function is as follows. Catalyzes reversively the conversion of L-aspartate beta-semialdehyde (ASA) to L-2,4-diaminobutyrate (DABA) by transamination with L-glutamate. This Vibrio cholerae serotype O1 (strain ATCC 39315 / El Tor Inaba N16961) protein is Diaminobutyrate--2-oxoglutarate transaminase (ectB).